Reading from the N-terminus, the 520-residue chain is Gamma aminobutyrate transaminase 3, chloroplastic (520 aa).

The N-terminal 44 residues, 1 to 44 (MAKITSLIGSGIVAATNQVGPHVKHIPAVGNLQKQIVSDQIQVR), are a transit peptide targeting the chloroplast. A pyridoxal 5'-phosphate-binding site is contributed by 172–173 (GS). Tyrosine 205 is a substrate binding site. A pyridoxal 5'-phosphate-binding site is contributed by aspartate 312. Lysine 341 lines the substrate pocket. Lysine 341 bears the N6-(pyridoxal phosphate)lysine mark.

Belongs to the class-III pyridoxal-phosphate-dependent aminotransferase family. Expressed in leaves, roots, stems, flowers and fruits.

It localises to the plastid. It is found in the chloroplast. The catalysed reaction is 4-aminobutanoate + pyruvate = succinate semialdehyde + L-alanine. The enzyme catalyses 4-aminobutanoate + glyoxylate = succinate semialdehyde + glycine. Functionally, transaminase that degrades gamma-amino butyric acid (GABA) and uses pyruvate or glyoxylate as amino-group acceptor. Cannot use beta-alanine, ornithine, acetylornithine, serine, glycine, asparagine, glutamine, glutamate, valine, leucine, isoleucine, methionine, phenylalanine, histidine, lysine, arginine, aspartate, threonine, tyrosine, tryptophan, proline, or cysteine as amino donors. The chain is Gamma aminobutyrate transaminase 3, chloroplastic (GABA-TP3) from Solanum lycopersicum (Tomato).